The sequence spans 117 residues: Large ribosomal subunit protein bL20 (117 aa).

The protein belongs to the bacterial ribosomal protein bL20 family.

Its function is as follows. Binds directly to 23S ribosomal RNA and is necessary for the in vitro assembly process of the 50S ribosomal subunit. It is not involved in the protein synthesizing functions of that subunit. The protein is Large ribosomal subunit protein bL20 of Geotalea daltonii (strain DSM 22248 / JCM 15807 / FRC-32) (Geobacter daltonii).